We begin with the raw amino-acid sequence, 275 residues long: Methylglyoxal reductase DkgA (275 aa).

Y51 acts as the Proton donor in catalysis. Residue H107 coordinates substrate. 187 to 241 (SPLAQGGKGVFDQKVIRDLADKYGKTPAQIVIRWHLDSGLVVIPKSVTPSRIAEN) serves as a coordination point for NADP(+).

It belongs to the aldo/keto reductase family. As to quaternary structure, monomer.

Its subcellular location is the cytoplasm. The catalysed reaction is hydroxyacetone + NADP(+) = methylglyoxal + NADPH + H(+). Aldo-keto reductase that significantly contributes to cellular methylglyoxal detoxification by catalyzing the NADPH-dependent conversion of methylglyoxal to acetol. In Escherichia coli O157:H7, this protein is Methylglyoxal reductase DkgA.